A 105-amino-acid polypeptide reads, in one-letter code: Large ribosomal subunit protein P1 (105 aa).

Methionine 1 is subject to Blocked amino end (Met). A compositionally biased stretch (low complexity) spans 65 to 76; sequence VAAPAGQQTQQA. Residues 65–105 form a disordered region; sequence VAAPAGQQTQQAAEKKEEKKEEEKKGPSEEEIGGGLSSLFG. Residues 77-92 show a composition bias toward basic and acidic residues; sequence AEKKEEKKEEEKKGPS.

It belongs to the eukaryotic ribosomal protein P1/P2 family. Part of the 50S ribosomal subunit. Homodimer, it forms part of the ribosomal stalk which helps the ribosome interact with GTP-bound translation factors. Forms a heptameric uL10/P0(P1)2(P1)2(P1)2 complex, where uL10/P0 forms an elongated spine to which the P1 dimers bind in a sequential fashion.

Its function is as follows. Forms part of the ribosomal stalk, playing a central role in the interaction of the ribosome with GTP-bound translation factors. This chain is Large ribosomal subunit protein P1, found in Sulfolobus acidocaldarius (strain ATCC 33909 / DSM 639 / JCM 8929 / NBRC 15157 / NCIMB 11770).